The sequence spans 542 residues: T-complex protein 1 subunit delta (542 aa).

Over residues 1–16 the composition is skewed to low complexity; sequence MPENVAPRTGPPAGAA. Residues 1-31 are disordered; the sequence is MPENVAPRTGPPAGAAGAAGGRGKSAYQDRD. Arginine 22 is modified (omega-N-methylarginine). Position 24 is an N6-acetyllysine (lysine 24). Serine 39 is modified (phosphoserine). Glycine 56 lines the ADP pocket. Glycine 56 contacts ATP. Residue aspartate 107 participates in Mg(2+) binding. Residues glycine 108, threonine 109, threonine 110, serine 111, asparagine 175, serine 176, and lysine 177 each coordinate ADP. Residues glycine 108 and threonine 109 each coordinate ATP. Lysine 177 serves as a coordination point for ATP. Phosphoserine occurs at positions 187 and 205. 4 positions are modified to N6-acetyllysine: lysine 291, lysine 305, lysine 322, and lysine 329. Glycine 428 is an ADP binding site. Serine 447 is modified (phosphoserine). Glutamine 513 contacts ADP.

The protein belongs to the TCP-1 chaperonin family. As to quaternary structure, component of the chaperonin-containing T-complex (TRiC), a hexadecamer composed of two identical back-to-back stacked rings enclosing a protein folding chamber. Each ring is made up of eight different subunits: TCP1/CCT1, CCT2, CCT3, CCT4, CCT5, CCT6A/CCT6, CCT7, CCT8. Interacts with PACRG. Interacts with DNAAF4. Interacts with DLEC1.

It localises to the cytoplasm. It is found in the melanosome. The protein resides in the cytoskeleton. The protein localises to the microtubule organizing center. Its subcellular location is the centrosome. It localises to the cilium basal body. It carries out the reaction ATP + H2O = ADP + phosphate + H(+). In terms of biological role, component of the chaperonin-containing T-complex (TRiC), a molecular chaperone complex that assists the folding of actin, tubulin and other proteins upon ATP hydrolysis. The TRiC complex mediates the folding of WRAP53/TCAB1, thereby regulating telomere maintenance. As part of the TRiC complex may play a role in the assembly of BBSome, a complex involved in ciliogenesis regulating transports vesicles to the cilia. The protein is T-complex protein 1 subunit delta (CCT4) of Bos taurus (Bovine).